Here is a 353-residue protein sequence, read N- to C-terminus: 2-Hydroxyacid oxidase 2 (353 aa).

The FMN hydroxy acid dehydrogenase domain maps to 2–353 (PLVCLTDFRE…NQDLIQFSRL (352 aa)). FMN contacts are provided by residues 77–79 (PTG), S106, and Q128. Y130 serves as a coordination point for a 2-oxocarboxylate. Residue T156 participates in FMN binding. Residue R165 participates in a 2-oxocarboxylate binding. An FMN-binding site is contributed by K224. The active-site Proton acceptor is the H248. R251 provides a ligand contact to a 2-oxocarboxylate. Residues 279 to 283 (DGGIR) and 302 to 303 (GR) each bind FMN. The Microbody targeting signal motif lies at 351 to 353 (SRL).

Belongs to the FMN-dependent alpha-hydroxy acid dehydrogenase family. In terms of assembly, homotetramer. FMN is required as a cofactor.

The protein resides in the peroxisome. The catalysed reaction is a (2S)-2-hydroxycarboxylate + O2 = a 2-oxocarboxylate + H2O2. It catalyses the reaction 2-hydroxyhexadecanoate + O2 = 2-oxohexadecanoate + H2O2. The enzyme catalyses 2-hydroxyoctanoate + O2 = 2-oxooctanoate + H2O2. It participates in lipid metabolism; fatty acid metabolism. Its function is as follows. Oxidase that catalyzes the oxidation of medium and long chain hydroxyacids such as 2-hydroxyhexadecanoate and 2-hydroxyoctanoate, to the correspondong 2-oxoacids. Its role in the oxidation of 2-hydroxy fatty acids may contribute to the general pathway of fatty acid alpha-oxidation. Active in vitro with the artificial electron acceptor 2,6-dichlorophenolindophenol (DCIP), but O2 is believed to be the physiological electron acceptor, leading to the production of H2O2. This chain is 2-Hydroxyacid oxidase 2 (HAO2), found in Bos taurus (Bovine).